Consider the following 202-residue polypeptide: Small ribosomal subunit protein uS4 (202 aa).

The segment at 23 to 42 (RKNARRAYAPGQHGQARKKR) is disordered. The 64-residue stretch at 90 to 153 (MRLDNTVFRL…RSQDLVKRNM (64 aa)) folds into the S4 RNA-binding domain.

Belongs to the universal ribosomal protein uS4 family. Part of the 30S ribosomal subunit. Contacts protein S5. The interaction surface between S4 and S5 is involved in control of translational fidelity.

Its function is as follows. One of the primary rRNA binding proteins, it binds directly to 16S rRNA where it nucleates assembly of the body of the 30S subunit. With S5 and S12 plays an important role in translational accuracy. The chain is Small ribosomal subunit protein uS4 from Microcystis aeruginosa (strain NIES-843 / IAM M-2473).